We begin with the raw amino-acid sequence, 264 residues long: 5'-nucleotidase SurE (264 aa).

4 residues coordinate a divalent metal cation: Asp-8, Asp-9, Ser-39, and Asn-95.

It belongs to the SurE nucleotidase family. A divalent metal cation serves as cofactor.

Its subcellular location is the cytoplasm. The enzyme catalyses a ribonucleoside 5'-phosphate + H2O = a ribonucleoside + phosphate. Its function is as follows. Nucleotidase that shows phosphatase activity on nucleoside 5'-monophosphates. This chain is 5'-nucleotidase SurE, found in Syntrophomonas wolfei subsp. wolfei (strain DSM 2245B / Goettingen).